Consider the following 118-residue polypeptide: uncharacterized protein (118 aa).

The N-terminal stretch at 1–18 (MSKLIFLFVVATLATIKA) is a signal peptide. An N-linked (GlcNAc...) asparagine; by host glycan is attached at Asn24.

This is an uncharacterized protein from Magallana gigas (Pacific oyster).